Reading from the N-terminus, the 209-residue chain is Uracil phosphoribosyltransferase (209 aa).

5-phospho-alpha-D-ribose 1-diphosphate-binding positions include Arg-79, Arg-104, and Asp-131–Ser-139. Uracil is bound by residues Ile-194 and Gly-199–Ala-201. Asp-200 contributes to the 5-phospho-alpha-D-ribose 1-diphosphate binding site.

It belongs to the UPRTase family. Mg(2+) serves as cofactor.

The enzyme catalyses UMP + diphosphate = 5-phospho-alpha-D-ribose 1-diphosphate + uracil. It functions in the pathway pyrimidine metabolism; UMP biosynthesis via salvage pathway; UMP from uracil: step 1/1. Its activity is regulated as follows. Allosterically activated by GTP. In terms of biological role, catalyzes the conversion of uracil and 5-phospho-alpha-D-ribose 1-diphosphate (PRPP) to UMP and diphosphate. The polypeptide is Uracil phosphoribosyltransferase (Rhizobium meliloti (strain 1021) (Ensifer meliloti)).